Consider the following 288-residue polypeptide: NAD kinase (288 aa).

Residue Asp70 is the Proton acceptor of the active site. Residues 70–71 (DG), 144–145 (ND), Arg155, Lys172, Asp174, 185–190 (TGYSLS), and Gln245 each bind NAD(+).

The protein belongs to the NAD kinase family. A divalent metal cation is required as a cofactor.

The protein resides in the cytoplasm. The enzyme catalyses NAD(+) + ATP = ADP + NADP(+) + H(+). Involved in the regulation of the intracellular balance of NAD and NADP, and is a key enzyme in the biosynthesis of NADP. Catalyzes specifically the phosphorylation on 2'-hydroxyl of the adenosine moiety of NAD to yield NADP. The protein is NAD kinase of Geobacter sp. (strain M21).